A 691-amino-acid polypeptide reads, in one-letter code: Glycine--tRNA ligase beta subunit (691 aa).

The protein belongs to the class-II aminoacyl-tRNA synthetase family. In terms of assembly, tetramer of two alpha and two beta subunits.

It is found in the cytoplasm. The enzyme catalyses tRNA(Gly) + glycine + ATP = glycyl-tRNA(Gly) + AMP + diphosphate. This is Glycine--tRNA ligase beta subunit from Limosilactobacillus reuteri (strain DSM 20016) (Lactobacillus reuteri).